The chain runs to 260 residues: Small ribosomal subunit protein uS2 (260 aa).

It belongs to the universal ribosomal protein uS2 family.

The chain is Small ribosomal subunit protein uS2 from Streptococcus gordonii (strain Challis / ATCC 35105 / BCRC 15272 / CH1 / DL1 / V288).